A 126-amino-acid chain; its full sequence is Diadenosine hexaphosphate hydrolase (126 aa).

Positions 1–121 (MELGAGGVVF…EDLGLLEVAL (121 aa)) constitute a Nudix hydrolase domain. Residues 21 to 23 (DRM) and 30 to 32 (KGH) contribute to the substrate site. Residues 31 to 52 (GHPEPGESLEEAAVREVWEETG) carry the Nudix box motif. Mg(2+)-binding residues include glutamate 46 and glutamate 50. Substrate-binding positions include 66–68 (YVN), arginine 74, and glutamate 112.

This sequence belongs to the Nudix hydrolase family. As to quaternary structure, monomer. The cofactor is Mg(2+).

The catalysed reaction is P(1),P(6)-bis(5'-adenosyl) hexaphosphate + H2O = 2 ATP + 2 H(+). It carries out the reaction P(1),P(5)-bis(5'-adenosyl) pentaphosphate + H2O = ADP + ATP + 2 H(+). The enzyme catalyses P(1),P(4)-bis(5'-adenosyl) tetraphosphate + H2O = AMP + ATP + 2 H(+). Its activity is regulated as follows. Strongly inhibited by fluoride ions. Functionally, specifically hydrolyzes (di)adenosine polyphosphates but not ATP or diadenosine triphosphate, generating ATP as the product. Diadenosine hexaphosphate (Ap6A) is the preferred substrate and hydrolysis yields 2 ATP. It is the only enzyme that symmetrically hydrolyzes Ap6A. It also hydrolyzes diadenosine pentaphosphate (Ap5A), diadenosine tetraphosphate (Ap4A) and adenosine tetraphosphate (p4A). The protein is Diadenosine hexaphosphate hydrolase of Thermus thermophilus.